Consider the following 113-residue polypeptide: MSDINLPLSFSDAAAARVKMLIAEEENPALKLRVYITGGGCSGFQYGFTFDESVNEGDTTIENSGVTLVVDPMSLQYLIGGVVDYTEGLEGSRFFVNNPNATTTCGCGASFSV.

Positions 41, 105, and 107 each coordinate iron-sulfur cluster.

Belongs to the HesB/IscA family. As to quaternary structure, homodimer. Requires iron-sulfur cluster as cofactor.

Functionally, required for insertion of 4Fe-4S clusters for at least IspG. The sequence is that of Iron-sulfur cluster insertion protein ErpA from Vibrio vulnificus (strain CMCP6).